Consider the following 378-residue polypeptide: Cytochrome b (378 aa).

The next 4 helical transmembrane spans lie at 34-54, 78-99, 114-134, and 179-199; these read FGSL…FLAM, WLLR…YLHV, WLVG…GYVL, and FFTF…IHIL. 2 residues coordinate heme b: histidine 84 and histidine 98. Heme b is bound by residues histidine 183 and histidine 197. An a ubiquinone-binding site is contributed by histidine 202. 4 helical membrane passes run 227–247, 289–309, 321–341, and 348–368; these read FKDI…VLIN, LGGV…PFYH, INQI…WIGA, and YVLV…FNPL.

The protein belongs to the cytochrome b family. The main subunits of complex b-c1 are: cytochrome b, cytochrome c1 and the Rieske protein. The cofactor is heme b.

The protein resides in the mitochondrion inner membrane. In terms of biological role, component of the ubiquinol-cytochrome c reductase complex (complex III or cytochrome b-c1 complex) that is part of the mitochondrial respiratory chain. The b-c1 complex mediates electron transfer from ubiquinol to cytochrome c. Contributes to the generation of a proton gradient across the mitochondrial membrane that is then used for ATP synthesis. In Cochliomyia hominivorax (Primary screw-worm), this protein is Cytochrome b (MT-CYB).